We begin with the raw amino-acid sequence, 274 residues long: Undecaprenyl-diphosphatase (274 aa).

7 helical membrane-spanning segments follow: residues 21–39, 44–64, 85–105, 109–129, 185–205, 214–234, and 247–267; these read FLPI…LLGF, AQVF…LVYW, FNLA…GKAI, LFTP…ILWA, ATDF…VYSL, VADL…AWLC, and FVPF…TAST.

It belongs to the UppP family.

Its subcellular location is the cell inner membrane. The enzyme catalyses di-trans,octa-cis-undecaprenyl diphosphate + H2O = di-trans,octa-cis-undecaprenyl phosphate + phosphate + H(+). Catalyzes the dephosphorylation of undecaprenyl diphosphate (UPP). Confers resistance to bacitracin. This chain is Undecaprenyl-diphosphatase, found in Verminephrobacter eiseniae (strain EF01-2).